Reading from the N-terminus, the 74-residue chain is ATP synthase F(1) complex subunit epsilon, mitochondrial (74 aa).

The protein belongs to the eukaryotic ATPase epsilon family. In terms of assembly, component of the ATP synthase complex composed at least of ATP5F1A/subunit alpha, ATP5F1B/subunit beta, ATP5MC1/subunit c (homooctomer), MT-ATP6/subunit a, MT-ATP8/subunit 8, ATP5ME/subunit e, ATP5MF/subunit f, ATP5MG/subunit g, ATP5MK/subunit k, ATP5MJ/subunit j, ATP5F1C/subunit gamma, ATP5F1D/subunit delta, ATP5F1E/subunit epsilon, ATP5PF/subunit F6, ATP5PB/subunit b, ATP5PD/subunit d, ATP5PO/subunit OSCP. ATP synthase complex consists of a soluble F(1) head domain (subunits alpha(3) and beta(3)) - the catalytic core - and a membrane F(0) domain - the membrane proton channel (subunits c, a, 8, e, f, g, k and j). These two domains are linked by a central stalk (subunits gamma, delta, and epsilon) rotating inside the F1 region and a stationary peripheral stalk (subunits F6, b, d, and OSCP).

It localises to the mitochondrion. The protein resides in the mitochondrion inner membrane. Subunit epsilon, of the mitochondrial membrane ATP synthase complex (F(1)F(0) ATP synthase or Complex V) that produces ATP from ADP in the presence of a proton gradient across the membrane which is generated by electron transport complexes of the respiratory chain. ATP synthase complex consist of a soluble F(1) head domain - the catalytic core - and a membrane F(1) domain - the membrane proton channel. These two domains are linked by a central stalk rotating inside the F(1) region and a stationary peripheral stalk. During catalysis, ATP synthesis in the catalytic domain of F(1) is coupled via a rotary mechanism of the central stalk subunits to proton translocation. In vivo, can only synthesize ATP although its ATP hydrolase activity can be activated artificially in vitro. May be essential for the assembly of F(1) and may play an important role in the incorporation of the hydrophobic subunit c into the F(1)-c oligomer rotor of the mitochondrial ATP synthase complex. The sequence is that of ATP synthase F(1) complex subunit epsilon, mitochondrial from Dictyostelium discoideum (Social amoeba).